The sequence spans 91 residues: Small ribosomal subunit protein uS15 (91 aa).

This sequence belongs to the universal ribosomal protein uS15 family. Part of the 30S ribosomal subunit. Forms a bridge to the 50S subunit in the 70S ribosome, contacting the 23S rRNA.

One of the primary rRNA binding proteins, it binds directly to 16S rRNA where it helps nucleate assembly of the platform of the 30S subunit by binding and bridging several RNA helices of the 16S rRNA. Functionally, forms an intersubunit bridge (bridge B4) with the 23S rRNA of the 50S subunit in the ribosome. The sequence is that of Small ribosomal subunit protein uS15 from Rickettsia africae (strain ESF-5).